The primary structure comprises 1761 residues: Laminin subunit beta-4 (1761 aa).

A signal peptide spans 1 to 19; that stretch reads MQFQLTLFLHLGWLSYSKA. In terms of domain architecture, Laminin N-terminal spans 24-264; that stretch reads NRGACHPTTG…ALYEMIVRGS (241 aa). N-linked (GlcNAc...) asparagine glycosylation is found at asparagine 169, asparagine 229, and asparagine 246. Disulfide bonds link cysteine 265/cysteine 274, cysteine 267/cysteine 295, cysteine 297/cysteine 306, cysteine 309/cysteine 329, cysteine 332/cysteine 341, cysteine 334/cysteine 359, cysteine 362/cysteine 371, cysteine 374/cysteine 392, cysteine 395/cysteine 408, cysteine 397/cysteine 423, cysteine 425/cysteine 434, cysteine 437/cysteine 452, cysteine 455/cysteine 468, cysteine 457/cysteine 475, cysteine 477/cysteine 486, cysteine 489/cysteine 503, cysteine 506/cysteine 518, cysteine 508/cysteine 525, and cysteine 527/cysteine 536. Laminin EGF-like domains follow at residues 265 to 331, 332 to 394, 395 to 454, and 455 to 505; these read CFCN…ACRS, CSCN…ACIP, CECD…GCQP, and CDCN…GCSP. The Laminin EGF-like 5; truncated domain occupies 506-552; it reads CDCDIGGAYSNVCSPKNGQCECRPHVTGRSCSEPAPGYFFAPLNFYL. The Laminin IV type B domain occupies 545-763; sequence FAPLNFYLYE…LIISMSAKLH (219 aa). Cystine bridges form between cysteine 769/cysteine 781, cysteine 771/cysteine 788, cysteine 790/cysteine 799, cysteine 802/cysteine 814, cysteine 817/cysteine 829, cysteine 819/cysteine 836, cysteine 838/cysteine 847, cysteine 850/cysteine 860, cysteine 863/cysteine 872, cysteine 865/cysteine 879, cysteine 882/cysteine 891, cysteine 894/cysteine 908, cysteine 913/cysteine 938, cysteine 940/cysteine 949, cysteine 952/cysteine 967, cysteine 970/cysteine 984, cysteine 972/cysteine 991, cysteine 994/cysteine 1003, cysteine 1006/cysteine 1019, cysteine 1022/cysteine 1043, cysteine 1024/cysteine 1050, cysteine 1052/cysteine 1061, cysteine 1064/cysteine 1077, cysteine 1080/cysteine 1092, cysteine 1082/cysteine 1099, cysteine 1101/cysteine 1110, cysteine 1113/cysteine 1125, cysteine 1128/cysteine 1140, cysteine 1130/cysteine 1147, cysteine 1149/cysteine 1158, and cysteine 1161/cysteine 1172. 8 Laminin EGF-like domains span residues 769 to 816, 817 to 862, 863 to 910, 911 to 969, 970 to 1021, 1022 to 1079, 1080 to 1127, and 1128 to 1174; these read CKCH…GCHP, CHCH…SCHP, CPCN…PCRP, CLCP…PCQP, CACN…TCRR, CSCH…GCQS, CDCD…RCIP, and CDCN…TCLQ. Asparagine 1016 carries N-linked (GlcNAc...) asparagine glycosylation. Asparagine 1055 is a glycosylation site (N-linked (GlcNAc...) asparagine). The domain II stretch occupies residues 1175–1375; sequence CHLCFDQWDH…PDIQILNEKV (201 aa). N-linked (GlcNAc...) asparagine glycans are attached at residues asparagine 1223, asparagine 1301, asparagine 1326, asparagine 1333, and asparagine 1354. The stretch at 1243–1301 forms a coiled coil; sequence KVKDYHDSVRRQIMQLNEQLKAVYEFQDLKDTIERAKNEADLLLEDLQEEIDLQSSVLN. Positions 1376–1408 are domain alpha; sequence CGDPGNVPCVPLPCGGALCTGRKGHRKCRGPGC. Residues 1409 to 1761 are domain I; sequence HGSLTLSTNA…QEKKYARCYS (353 aa). Residues 1416–1480 are a coiled coil; the sequence is TNALQKAQEA…SDSEEENINL (65 aa). Asparagine 1469, asparagine 1517, asparagine 1587, asparagine 1596, asparagine 1609, and asparagine 1725 each carry an N-linked (GlcNAc...) asparagine glycan. A coiled-coil region spans residues 1525 to 1759; the sequence is IQKHMQLCED…VEQEKKYARC (235 aa).

In terms of assembly, laminin is a complex glycoprotein, consisting of three different polypeptide chains (alpha, beta, gamma), which are bound to each other by disulfide bonds into a cross-shaped molecule comprising one long and three short arms with globules at each end.

It is found in the secreted. The protein resides in the extracellular space. It localises to the extracellular matrix. The protein localises to the basement membrane. Binding to cells via a high affinity receptor, laminin is thought to mediate the attachment, migration and organization of cells into tissues during embryonic development by interacting with other extracellular matrix components. The protein is Laminin subunit beta-4 (LAMB4) of Homo sapiens (Human).